A 236-amino-acid polypeptide reads, in one-letter code: DNA repair protein RecO (236 aa).

Belongs to the RecO family.

Its function is as follows. Involved in DNA repair and RecF pathway recombination. The sequence is that of DNA repair protein RecO from Stutzerimonas stutzeri (strain A1501) (Pseudomonas stutzeri).